A 322-amino-acid chain; its full sequence is Extracellular metalloprotease AFUB_008060 (322 aa).

The first 22 residues, Met-1–Ala-22, serve as a signal peptide directing secretion. N-linked (GlcNAc...) asparagine glycans are attached at residues Asn-123 and Asn-197. His-233 serves as a coordination point for Zn(2+). The active site involves Glu-234. Residue His-237 participates in Zn(2+) binding. A disulfide bridge links Cys-272 with Cys-299.

Belongs to the peptidase M43B family.

The protein resides in the secreted. Secreted metalloproteinase that allows assimilation of proteinaceous substrates. Plays a pivotal role as a pathogenicity determinant during infections and contributes to the ability of the pathogen to persist within the mammalian host. The protein is Extracellular metalloprotease AFUB_008060 of Aspergillus fumigatus (strain CBS 144.89 / FGSC A1163 / CEA10) (Neosartorya fumigata).